A 197-amino-acid chain; its full sequence is Ribonuclease HII (197 aa).

Positions Ile-4 to Ser-197 constitute an RNase H type-2 domain. The a divalent metal cation site is built by Asp-10, Glu-11, and Asp-106.

It belongs to the RNase HII family. Requires Mn(2+) as cofactor. It depends on Mg(2+) as a cofactor.

The protein localises to the cytoplasm. The catalysed reaction is Endonucleolytic cleavage to 5'-phosphomonoester.. Functionally, endonuclease that specifically degrades the RNA of RNA-DNA hybrids. This is Ribonuclease HII from Polynucleobacter necessarius subsp. necessarius (strain STIR1).